The following is a 525-amino-acid chain: Lymphocyte activation gene 3 protein (525 aa).

Residues 1-23 (MRQDLFLDLLLLQLLWEAPVVSS) form the signal peptide. At 24-442 (GPGKELSVVW…ISGDLKGGHL (419 aa)) the chain is on the extracellular side. Positions 37–163 (GAPVHLPCSL…FSCSLRLRVG (127 aa)) constitute an Ig-like V-type domain. An interaction with FGL1 region spans residues 37 to 246 (GAPVHLPCSL…LTYRDGFNVS (210 aa)). Cysteine 44 and cysteine 156 are joined by a disulfide. 3 consecutive Ig-like C2-type domains span residues 164–246 (QASM…FNVS), 258–341 (PVAP…AAVT), and 345–412 (ITVT…EGQK). An N-linked (GlcNAc...) asparagine glycan is attached at asparagine 184. Cysteines 185 and 235 form a disulfide. N-linked (GlcNAc...) asparagine glycans are attached at residues asparagine 244 and asparagine 309. 2 disulfides stabilise this stretch: cysteine 276/cysteine 327 and cysteine 363/cysteine 405. The tract at residues 422 to 442 (ESSSGAWSAKRISGDLKGGHL) is connecting peptide. Residues 443-463 (FLSLILGALALFLLVTGAFGF) traverse the membrane as a helical segment. At 464 to 525 (HLWRRQLLRR…PELEPESRQL (62 aa)) the chain is on the cytoplasmic side. The interval 486–525 (PVQSKIEELEREPETEMEPETEPDPEPQPEPELEPESRQL) is disordered. Residues 490–495 (KIEELE) carry the KIEELE motif motif. Residues 490–499 (KIEELEREPE) show a composition bias toward basic and acidic residues. The tract at residues 493 to 522 (ELEREPETEMEPETEPDPEPQPEPELEPES) is 15 X 2 AA tandem repeats of E-X. The span at 500–519 (TEMEPETEPDPEPQPEPELE) shows a compositional bias: acidic residues.

Belongs to the LAG3 family. As to quaternary structure, interacts with MHC class II (MHC-II); selectively recognizes stable complexes of peptide and MHC-II. Interacts with FGL1 (via the Fibrinogen C-terminal domain). Proteolytically cleaved by ADAM10 and ADAM17 within the connecting peptide region, leading to release of Secreted lymphocyte activation gene 3 protein (sLAG-3). ADAM10 mediates constitutive cleavage, but cleavage increases following T-cell activation, whereas shedding by ADAM17 is induced by TCR signaling in a PRKCQ-dependent manner.

It localises to the cell membrane. The protein localises to the secreted. In terms of biological role, lymphocyte activation gene 3 protein: Inhibitory receptor on antigen activated T-cells. Delivers inhibitory signals upon binding to ligands, such as FGL1. FGL1 constitutes a major ligand of LAG3 and is responsible for LAG3 T-cell inhibitory function. Following TCR engagement, LAG3 associates with CD3-TCR in the immunological synapse and directly inhibits T-cell activation. May inhibit antigen-specific T-cell activation in synergy with PDCD1/PD-1, possibly by acting as a coreceptor for PDCD1/PD-1. Negatively regulates the proliferation, activation, effector function and homeostasis of both CD8(+) and CD4(+) T-cells. Also mediates immune tolerance: constitutively expressed on a subset of regulatory T-cells (Tregs) and contributes to their suppressive function. Also acts as a negative regulator of plasmacytoid dendritic cell (pDCs) activation. Binds MHC class II (MHC-II); the precise role of MHC-II-binding is however unclear. Its function is as follows. May function as a ligand for MHC class II (MHC-II) on antigen-presenting cells (APC), promoting APC activation/maturation and driving Th1 immune response. This chain is Lymphocyte activation gene 3 protein (Lag3), found in Rattus norvegicus (Rat).